We begin with the raw amino-acid sequence, 351 residues long: Synaptonemal complex central element protein 1 (351 aa).

Residues 1–10 (MAGRSLTSKA) show a composition bias toward polar residues. Disordered regions lie at residues 1–31 (MAGR…TSSQ) and 267–351 (KCQQ…KELF). The stretch at 52–290 (RVEVLINRIN…ELEKHGMQVP (239 aa)) forms a coiled coil.

The protein belongs to the SYCE family. Homodimer. Found in a complex with SYCP1 and SYCE2. Interacts with SYCP1, SYCE2 and SYCE3. Interacts with SIX6OS1.

It is found in the nucleus. Its subcellular location is the chromosome. Functionally, major component of the transverse central element of synaptonemal complexes (SCS), formed between homologous chromosomes during meiotic prophase. Requires SYCP1 in order to be incorporated into the central element. May have a role in the synaptonemal complex assembly, stabilization and recombination. In Homo sapiens (Human), this protein is Synaptonemal complex central element protein 1 (SYCE1).